Reading from the N-terminus, the 208-residue chain is MTLKLTYFDIHGLAEPIRLLLADKQVAYEDHRVTYEQWADIKPKMIFGQVPCLLSGDEEIVQSGAIIRHLARLNGLNGSNETETTFIDMFYEGLRDLHTKYTTMIYRNYEDGKAPYIKDVLPGELARLEKLFHTYKNGEHYVIGDKESYADYVLFEELDIHLILTPNALDGVPALKKFHERFAERPNIKAYLNKRAAINPPVNGNGKQ.

One can recognise a GST N-terminal domain in the interval 1 to 78; it reads MTLKLTYFDI…HLARLNGLNG (78 aa). Glutathione contacts are provided by residues tyrosine 7, tryptophan 38, lysine 42, 49–50, and 62–63; these read QV and QS. In terms of domain architecture, GST C-terminal spans 80–202; the sequence is NETETTFIDM…NKRAAINPPV (123 aa).

It belongs to the GST superfamily. Pi family. As to quaternary structure, homodimer. In terms of tissue distribution, expressed in dopaminergic (DA) neuron (at protein levels).

The enzyme catalyses RX + glutathione = an S-substituted glutathione + a halide anion + H(+). In terms of biological role, conjugation of reduced glutathione to a wide number of exogenous and endogenous hydrophobic electrophiles. Prevents dopaminergic CEP neuron degeneration in response to Mn(2+). In Caenorhabditis elegans, this protein is Glutathione S-transferase P (gst-1).